A 658-amino-acid chain; its full sequence is Serine/threonine-protein kinase shk1/pak1 (658 aa).

Disordered stretches follow at residues 1–21 (MERG…ITPI), 39–104 (RKLK…SYDE), 126–147 (GGSS…STVI), and 213–365 (GAKP…QQSN). A compositionally biased stretch (polar residues) spans 66–98 (PLSQSRTTVSRVSLGSRQHSSSSIRKLQTNVSD). Positions 129-140 (SPTSSYGSGSAS) are enriched in low complexity. A CRIB domain is found at 147 to 160 (ISSPFDPKHVTHVG). Composition is skewed to low complexity over residues 226 to 254 (PLLS…LYPS) and 262 to 272 (ASSSSSPLLSS). Over residues 273–300 (QTVKTTTSNASRQPSPLVSSKSTDNIIR) the composition is skewed to polar residues. 2 positions are modified to phosphoserine: S301 and S303. A Protein kinase domain is found at 386-637 (YRNFVKIGQG…SGELLRHPFL (252 aa)). ATP contacts are provided by residues 392-400 (IGQGASGDV) and K415. The active-site Proton acceptor is the D505.

This sequence belongs to the protein kinase superfamily. STE Ser/Thr protein kinase family. STE20 subfamily. In terms of assembly, forms an activated complex with GTP-bound ras-like cdc42. Interacts with skb1 and the SH3 domain of skb5 via its amino-terminal regulatory domain. Skb1, cdc42 and shk1 are able to form a ternary complex in vivo. Interacts with rga8 and may interact with byr2. Post-translationally, autophosphorylated on serine residues.

It is found in the cytoplasm. The protein localises to the cytoskeleton. Its subcellular location is the spindle. The enzyme catalyses L-seryl-[protein] + ATP = O-phospho-L-seryl-[protein] + ADP + H(+). It carries out the reaction L-threonyl-[protein] + ATP = O-phospho-L-threonyl-[protein] + ADP + H(+). Its function is as follows. MAP4K component of the MAPK pathway required for the mating pheromone response. Phosphorylates histone H2B to form H2BS10ph. Phosphorylates tea1. Required for skb1-dependent mitotic inhibitory function. Regulates microtubule dynamics and cell polarity. This chain is Serine/threonine-protein kinase shk1/pak1 (shk1), found in Schizosaccharomyces pombe (strain 972 / ATCC 24843) (Fission yeast).